Here is a 1230-residue protein sequence, read N- to C-terminus: Ubiquitin carboxyl-terminal hydrolase 15 (1230 aa).

The MATH domain occupies 39–179; the sequence is EDSFTWNIPD…EGTLNITAYV (141 aa). Residues 205 to 536 form the USP domain; it reads VGFRNQGATC…SAYMLVYIRQ (332 aa). Residue Cys214 is the Nucleophile of the active site. His465 serves as the catalytic Proton acceptor.

Belongs to the peptidase C19 family. Interacts with PEX6; promoting association with the PEX1-PEX6 ATPase complex.

The protein localises to the cytoplasm. Its subcellular location is the cytosol. It is found in the peroxisome. It carries out the reaction Thiol-dependent hydrolysis of ester, thioester, amide, peptide and isopeptide bonds formed by the C-terminal Gly of ubiquitin (a 76-residue protein attached to proteins as an intracellular targeting signal).. Its function is as follows. Deubiquitinase involved in peroxisome import by mediating deubiquitination of the peroxisomal import receptor PEX5. Catalyzes deubiquitination of both monoubiquitiated and polyubiquitinated forms of PEX5 following its retrotranslocation into the cytosol, resetting PEX5 for a subsequent import cycle. The chain is Ubiquitin carboxyl-terminal hydrolase 15 from Saccharomyces cerevisiae (strain ATCC 204508 / S288c) (Baker's yeast).